Here is a 611-residue protein sequence, read N- to C-terminus: Chaperone protein DnaK (611 aa).

T173 is subject to Phosphothreonine; by autocatalysis. Residues 577-592 are compositionally biased toward low complexity; the sequence is QAAAGQAEGAQGAQDA. Residues 577–611 are disordered; the sequence is QAAAGQAEGAQGAQDAGTKKDNVVDAEFEEVKEDK. The segment covering 600–611 has biased composition (acidic residues); that stretch reads VDAEFEEVKEDK.

Belongs to the heat shock protein 70 family.

Acts as a chaperone. The chain is Chaperone protein DnaK from Bacillus cereus (strain G9842).